A 308-amino-acid chain; its full sequence is tRNA dimethylallyltransferase (308 aa).

10–17 (GPTGVGKT) contacts ATP. Substrate is bound at residue 12–17 (TGVGKT). The interval 35–38 (DSRQ) is interaction with substrate tRNA.

Belongs to the IPP transferase family. Monomer. Mg(2+) serves as cofactor.

It carries out the reaction adenosine(37) in tRNA + dimethylallyl diphosphate = N(6)-dimethylallyladenosine(37) in tRNA + diphosphate. Functionally, catalyzes the transfer of a dimethylallyl group onto the adenine at position 37 in tRNAs that read codons beginning with uridine, leading to the formation of N6-(dimethylallyl)adenosine (i(6)A). This chain is tRNA dimethylallyltransferase, found in Fervidobacterium nodosum (strain ATCC 35602 / DSM 5306 / Rt17-B1).